The primary structure comprises 1074 residues: DNA helicase B (1074 aa).

Disordered stretches follow at residues 1-38 (MARQ…EEEF), 380-420 (GAKP…HVRS), and 932-1014 (GSCA…FDEE). A compositionally biased stretch (acidic residues) spans 20–38 (DDEEEDCAQEEEGEQEEEF). Polar residues predominate over residues 934 to 946 (CAPSTGFASQPSS). Phosphoserine occurs at positions 942 and 946. Thr992 bears the Phosphothreonine mark. Phosphoserine occurs at positions 1015 and 1026. The Nuclear export signal signature appears at 1022–1046 (VEAPSPQVSSVFQNMRLNTLTPRQL). The interval 1040 to 1074 (TLTPRQLFKPTDNQDTGTAGVADDANDPSNQEMEM) is disordered.

The protein belongs to the RecD family. HELB subfamily. As to quaternary structure, binds to RPA1; this interaction promotes HELB recruitment to chromatin following DNA damage. Interacts with at least two subunits of the DNA polymerase alpha complex. Interacts with CDC45. Interacts with TOPB1. In terms of processing, phosphorylated at Ser-942 by CDK2 during the G1/S transition, resulting in its nuclear export into the cytoplasm. As S phase progresses, its exclusion from the nucleus promotes the activation of long-range resection.

Its subcellular location is the nucleus. The protein localises to the cytoplasm. It is found in the chromosome. It carries out the reaction ATP + H2O = ADP + phosphate + H(+). In terms of biological role, 5'-3' DNA helicase involved in DNA damage response by acting as an inhibitor of DNA end resection. Recruitment to single-stranded DNA (ssDNA) following DNA damage leads to inhibit the nucleases catalyzing resection, such as EXO1, BLM and DNA2, possibly via the 5'-3' ssDNA translocase activity of HELB. As cells approach S phase, DNA end resection is promoted by the nuclear export of HELB following phosphorylation. Acts independently of TP53BP1. Unwinds duplex DNA with 5'-3' polarity. Has single-strand DNA-dependent ATPase and DNA helicase activities. Prefers ATP and dATP as substrates. During S phase, may facilitate cellular recovery from replication stress. The protein is DNA helicase B of Mus musculus (Mouse).